A 1073-amino-acid chain; its full sequence is ATP-dependent helicase/deoxyribonuclease subunit B (1073 aa).

The protein belongs to the helicase family. AddB/RexB type 2 subfamily. Heterodimer of AddA and RexB. Requires Mg(2+) as cofactor.

Its function is as follows. The heterodimer acts as both an ATP-dependent DNA helicase and an ATP-dependent, dual-direction single-stranded exonuclease. Recognizes the chi site generating a DNA molecule suitable for the initiation of homologous recombination. This subunit has 5' -&gt; 3' nuclease activity but not helicase activity. The protein is ATP-dependent helicase/deoxyribonuclease subunit B of Streptococcus equi subsp. zooepidemicus (strain MGCS10565).